The chain runs to 107 residues: Iron-sulfur cluster assembly protein CyaY (107 aa).

Belongs to the frataxin family.

Its function is as follows. Involved in iron-sulfur (Fe-S) cluster assembly. May act as a regulator of Fe-S biogenesis. The chain is Iron-sulfur cluster assembly protein CyaY from Neisseria meningitidis serogroup B (strain ATCC BAA-335 / MC58).